The chain runs to 76 residues: uncharacterized protein (76 aa).

Residues 36–41 (PDIIIT) are required for interaction with PPP3CA. A phosphothreonine mark is found at threonine 44 and threonine 46.

Interacts (via PxIxIT motif, when phosphorylated on Thr-44) with PPP3CA. As to expression, not expressed in pancreatic duct cells (at protein level). Abundantly expressed in the pancreas and weakly expressed in the thyroid. In terms of tissue distribution, not expressed in pancreatic duct cells (at protein level). Abundantly expressed in the lymph node and weakly expressed in the stomach, trachea and bone marrow.

This is an uncharacterized protein from Homo sapiens (Human).